The following is a 189-amino-acid chain: Peptidyl-tRNA hydrolase (189 aa).

His-15 serves as a coordination point for tRNA. Catalysis depends on His-20, which acts as the Proton acceptor. 3 residues coordinate tRNA: Phe-66, Asn-68, and Asn-114.

It belongs to the PTH family. Monomer.

Its subcellular location is the cytoplasm. It carries out the reaction an N-acyl-L-alpha-aminoacyl-tRNA + H2O = an N-acyl-L-amino acid + a tRNA + H(+). Functionally, hydrolyzes ribosome-free peptidyl-tRNAs (with 1 or more amino acids incorporated), which drop off the ribosome during protein synthesis, or as a result of ribosome stalling. Catalyzes the release of premature peptidyl moieties from peptidyl-tRNA molecules trapped in stalled 50S ribosomal subunits, and thus maintains levels of free tRNAs and 50S ribosomes. The polypeptide is Peptidyl-tRNA hydrolase (Streptococcus equi subsp. equi (strain 4047)).